A 493-amino-acid polypeptide reads, in one-letter code: Xylulose kinase (493 aa).

Residue 84 to 85 coordinates substrate; it reads QH. The Proton acceptor role is filled by aspartate 247.

This sequence belongs to the FGGY kinase family.

It catalyses the reaction D-xylulose + ATP = D-xylulose 5-phosphate + ADP + H(+). Catalyzes the phosphorylation of D-xylulose to D-xylulose 5-phosphate. The protein is Xylulose kinase of Haemophilus influenzae (strain ATCC 51907 / DSM 11121 / KW20 / Rd).